Here is a 228-residue protein sequence, read N- to C-terminus: ATP-dependent dethiobiotin synthetase BioD 1 (228 aa).

Residue 13 to 18 (EVGKTV) coordinates ATP. T17 serves as a coordination point for Mg(2+). The active site involves K38. Residue S42 coordinates substrate. Residues D55, 116 to 119 (EGAG), 176 to 177 (ND), and 205 to 207 (PWL) contribute to the ATP site. Mg(2+) is bound by residues D55 and E116.

This sequence belongs to the dethiobiotin synthetase family. As to quaternary structure, homodimer. Mg(2+) is required as a cofactor.

The protein resides in the cytoplasm. It catalyses the reaction (7R,8S)-7,8-diammoniononanoate + CO2 + ATP = (4R,5S)-dethiobiotin + ADP + phosphate + 3 H(+). It participates in cofactor biosynthesis; biotin biosynthesis; biotin from 7,8-diaminononanoate: step 1/2. Its function is as follows. Catalyzes a mechanistically unusual reaction, the ATP-dependent insertion of CO2 between the N7 and N8 nitrogen atoms of 7,8-diaminopelargonic acid (DAPA, also called 7,8-diammoniononanoate) to form a ureido ring. This Salmonella typhimurium (strain LT2 / SGSC1412 / ATCC 700720) protein is ATP-dependent dethiobiotin synthetase BioD 1.